A 702-amino-acid chain; its full sequence is MEDPFEEADQPATEPGMVMDSVEAGDTTPPTKRKSKFSGVGKIFKPWKWRKKKSSDKFKETSEVLERKISMRKPREELVKRGVLLEDPEQGGEDPGKPSHAMLKNGHTTPIGNARSSSPVQVEEEPVRLASLRKAIPEEDLKKRLGSTGSQPNSEAESVPENVPKPPLLPPKRPLSSSHEASEGQAKDATSSGGTARFIISTSITTAPAATTAATSLAKTVNLSVTPSPAPRTLPAAPASTNTTATPSLTHMVPAKQPPIPPPKPAHRNSNPVIAELSQAINSGTLLSKPSPPLPPKRGIPSTSVPTLESAAAITTKTPSDEREKSTCSMGSELLPMISPRSPSPPLPTHIPPEPPRTPPFPAKTFQVVPEIQFPPSLDLHQEIPQQEDQKKEVPKRILDQNFGEPHIPSRLPPLPLHIRIQQALTSPLPVTPTLEGSHRAHSLLFENSDSFSEDSSTLGRTRSLPITIEMLKVPDDEEEEEQICPSTFSEETTPTSVIPKLPQCLREEEEKESDSDSEGPIQYRDEEDEDESYQSALANKVKRKDTLAMKLNHRPSEPELNLNSWPCKSKEEWNEIRHQIGNTLIRRLSQRPTPEELEQRNILQPKNEADRQAEKREIKRRLTRKLSQRPTVAELLARKILRFNEYVEVTDAQDYDRRADKPWTKLTPADKAAIRKELNEFKSSEMEVHEESKHFTRYHRP.

Disordered stretches follow at residues 1-38 (MEDPFEEADQPATEPGMVMDSVEAGDTTPPTKRKSKFS), 82-194 (GVLL…SSGG), and 222-363 (NLSV…PFPA). The RPEL 1 repeat unit spans residues 63–88 (EVLERKISMRKPREELVKRGVLLEDP). Positions 106–120 (GHTTPIGNARSSSPV) are enriched in polar residues. Phosphoserine is present on residues serine 116, serine 118, serine 131, and serine 147. Polar residues predominate over residues 147–156 (STGSQPNSEA). Over residues 163–173 (VPKPPLLPPKR) the composition is skewed to pro residues. A compositionally biased stretch (low complexity) spans 233 to 250 (TLPAAPASTNTTATPSLT). Residues serine 270 and serine 291 each carry the phosphoserine modification. The segment covering 301–318 (PSTSVPTLESAAAITTKT) has biased composition (polar residues). 2 positions are modified to phosphoserine: serine 342 and serine 344. The segment covering 342 to 362 (SPSPPLPTHIPPEPPRTPPFP) has biased composition (pro residues). Threonine 358 bears the Phosphothreonine mark. Serine 427 is subject to Phosphoserine. Position 432 is a phosphothreonine (threonine 432). Phosphoserine is present on residues serine 443, serine 453, and serine 464. Residues 473–536 (KVPDDEEEEE…EEDEDESYQS (64 aa)) form a disordered region. Residues 486 to 497 (PSTFSEETTPTS) are compositionally biased toward low complexity. A compositionally biased stretch (acidic residues) spans 508–518 (EEEEKESDSDS). Phosphoserine is present on residues serine 514, serine 516, serine 557, and serine 590. 2 RPEL repeats span residues 583-608 (NTLIRRLSQRPTPEELEQRNILQPKN) and 621-646 (RRLTRKLSQRPTVAELLARKILRFNE). The disordered stretch occupies residues 592–615 (RPTPEELEQRNILQPKNEADRQAE). Serine 628 is subject to Phosphoserine.

Belongs to the phosphatase and actin regulator family. As to quaternary structure, binds PPP1CA and actin.

The protein localises to the cytoplasm. The protein resides in the cell projection. Its subcellular location is the lamellipodium. Functionally, regulator of protein phosphatase 1 (PP1) required for neural tube and optic fissure closure, and enteric neural crest cell (ENCCs) migration during development. Acts as an activator of PP1 by interacting with PPP1CA and preventing phosphorylation of PPP1CA at 'Thr-320'. During neural tube closure, localizes to the ventral neural tube and activates PP1, leading to down-regulate cell proliferation within cranial neural tissue and the neural retina. Also acts as a regulator of migration of enteric neural crest cells (ENCCs) by activating PP1, leading to dephosphorylation and subsequent activation of cofilin (COF1 or COF2) and repression of the integrin signaling through the RHO/ROCK pathway. The polypeptide is Phosphatase and actin regulator 4 (PHACTR4) (Pongo abelii (Sumatran orangutan)).